The following is a 146-amino-acid chain: 3-hydroxyacyl-[acyl-carrier-protein] dehydratase FabZ (146 aa).

The active site involves His-47.

It belongs to the thioester dehydratase family. FabZ subfamily.

It is found in the cytoplasm. The enzyme catalyses a (3R)-hydroxyacyl-[ACP] = a (2E)-enoyl-[ACP] + H2O. Involved in unsaturated fatty acids biosynthesis. Catalyzes the dehydration of short chain beta-hydroxyacyl-ACPs and long chain saturated and unsaturated beta-hydroxyacyl-ACPs. The protein is 3-hydroxyacyl-[acyl-carrier-protein] dehydratase FabZ of Methylococcus capsulatus (strain ATCC 33009 / NCIMB 11132 / Bath).